Consider the following 139-residue polypeptide: Ribonuclease P protein component (139 aa).

The segment at 120-139 (KPTTGVEYSPKNEKCESVLP) is disordered. The span at 129–139 (PKNEKCESVLP) shows a compositional bias: basic and acidic residues.

The protein belongs to the RnpA family. In terms of assembly, consists of a catalytic RNA component (M1 or rnpB) and a protein subunit.

The catalysed reaction is Endonucleolytic cleavage of RNA, removing 5'-extranucleotides from tRNA precursor.. Functionally, RNaseP catalyzes the removal of the 5'-leader sequence from pre-tRNA to produce the mature 5'-terminus. It can also cleave other RNA substrates such as 4.5S RNA. The protein component plays an auxiliary but essential role in vivo by binding to the 5'-leader sequence and broadening the substrate specificity of the ribozyme. This chain is Ribonuclease P protein component, found in Chlamydia caviae (strain ATCC VR-813 / DSM 19441 / 03DC25 / GPIC) (Chlamydophila caviae).